The sequence spans 392 residues: Xyloside xylosyltransferase 1 (392 aa).

At 1–19 the chain is on the cytoplasmic side; the sequence is MGLLRGGAACARAMARLGA. A helical; Signal-anchor for type II membrane protein transmembrane segment spans residues 20 to 42; sequence LRSHYCALLLAAALAVCAFYYLG. The Lumenal segment spans residues 43–392; it reads SGRETFSSAT…GNCNTPIPED (350 aa). 103 to 105 is a binding site for UDP-alpha-D-xylose; that stretch reads MFT. Asp225 lines the Mn(2+) pocket. UDP-alpha-D-xylose is bound at residue Leu226. Residue Asp227 participates in Mn(2+) binding. The interval 262–265 is interaction with target proteins; it reads HTFW. UDP-alpha-D-xylose-binding residues include Ser289, Leu327, and Gln330. Positions 330 and 359 each coordinate a glycoprotein. 2 disulfide bridges follow: Cys349–Cys374 and Cys356–Cys385. Position 382 (His382) interacts with Mn(2+). Residue Asn384 coordinates a glycoprotein.

It belongs to the glycosyltransferase 8 family. In terms of assembly, homodimer. Dimer formation may be essential for the retention in endoplasmic reticulum. Requires Mg(2+) as cofactor. Mn(2+) is required as a cofactor.

It localises to the endoplasmic reticulum membrane. The enzyme catalyses 3-O-[alpha-D-xylosyl-(1-&gt;3)-beta-D-glucosyl]-L-seryl-[EGF-like domain protein] + UDP-alpha-D-xylose = 3-O-[alpha-D-xylosyl-(1-&gt;3)-alpha-D-xylosyl-(1-&gt;3)-beta-D-glucosyl]-L-seryl-[EGF-like domain protein] + UDP + H(+). Its function is as follows. Alpha-1,3-xylosyltransferase, which elongates the O-linked xylose-glucose disaccharide attached to EGF-like repeats in the extracellular domain of target proteins by catalyzing the addition of the second xylose. Known targets include Notch proteins and coagulation factors, such as F9. The chain is Xyloside xylosyltransferase 1 (Xxylt1) from Mus musculus (Mouse).